The sequence spans 828 residues: DNA gyrase subunit A (828 aa).

Residues 32–497 form the Topo IIA-type catalytic domain; the sequence is LPDVRDGLKP…EVLSLEDEDL (466 aa). The active-site O-(5'-phospho-DNA)-tyrosine intermediate is the tyrosine 120. The GyrA-box signature appears at 524-530; it reads QKRGGRG.

This sequence belongs to the type II topoisomerase GyrA/ParC subunit family. In terms of assembly, heterotetramer, composed of two GyrA and two GyrB chains. In the heterotetramer, GyrA contains the active site tyrosine that forms a transient covalent intermediate with DNA, while GyrB binds cofactors and catalyzes ATP hydrolysis.

The protein localises to the cytoplasm. It catalyses the reaction ATP-dependent breakage, passage and rejoining of double-stranded DNA.. A type II topoisomerase that negatively supercoils closed circular double-stranded (ds) DNA in an ATP-dependent manner to modulate DNA topology and maintain chromosomes in an underwound state. Negative supercoiling favors strand separation, and DNA replication, transcription, recombination and repair, all of which involve strand separation. Also able to catalyze the interconversion of other topological isomers of dsDNA rings, including catenanes and knotted rings. Type II topoisomerases break and join 2 DNA strands simultaneously in an ATP-dependent manner. The polypeptide is DNA gyrase subunit A (Streptococcus pyogenes serotype M18 (strain MGAS8232)).